Consider the following 471-residue polypeptide: NADH-quinone oxidoreductase subunit N (471 aa).

The next 14 membrane-spanning stretches (helical) occupy residues 6–26 (FILPEIFISLSIMFLLLLGVY), 30–50 (SSNIVHNLAVGSLLITGILIF), 70–90 (LSSFMKILTILGGAFVLSIST), 98–118 (IFLIEYPVLILSSILGMMVMI), 123–143 (LMVFYIGLELQSLALYVLASF), 158–178 (FVLSALSSGLLLYGCSLVYGF), 198–218 (LTFGIVFILVGLAFKISAVPF), 230–250 (PTAVTLFFAIVPKVAALTVFI), 264–284 (WQPILIFLSIASMIFGAIAAI), 292–312 (LIAYSSIGHMGYALAGLSTGS), 320–340 (IVYMSIYLVMNLAFFSCLLML), 365–385 (LSLLAILFSLAGIPPLAGFFA), 400–420 (FLAIVGLLSTVIAAFYYLKII), and 438–458 (IWLKGSLTFSTLLILLYFIFP).

It belongs to the complex I subunit 2 family. As to quaternary structure, NDH-1 is composed of 14 different subunits. Subunits NuoA, H, J, K, L, M, N constitute the membrane sector of the complex.

It localises to the cell inner membrane. The enzyme catalyses a quinone + NADH + 5 H(+)(in) = a quinol + NAD(+) + 4 H(+)(out). In terms of biological role, NDH-1 shuttles electrons from NADH, via FMN and iron-sulfur (Fe-S) centers, to quinones in the respiratory chain. The immediate electron acceptor for the enzyme in this species is believed to be ubiquinone. Couples the redox reaction to proton translocation (for every two electrons transferred, four hydrogen ions are translocated across the cytoplasmic membrane), and thus conserves the redox energy in a proton gradient. In Pelagibacter ubique (strain HTCC1062), this protein is NADH-quinone oxidoreductase subunit N.